We begin with the raw amino-acid sequence, 288 residues long: MHFLSPAKLNLFLQILGRREDDFHEIVTRYQAIAFGDQLSLSISSRDSLQVINACHLETPSNSIWKSVALFRRYTGITTPVSWRVVKQIPVGAGLAGGSSNAATALFALNQIFKTGLSDEEMRSLAEQLGVDTPFFFSTGAALGVARGEKIIALEESVSDRYVLYFSSEGVLTSRAFAAVQPSDCSSRKNLEYTQNDLEKPVFRLRLDLKEKKHWLESLWAELPVYIGLTGSGATLFVRYPEILEKDLSYAAQIQRAVTLSGGLLTSPIRRDPTAWYSIYSESALAAT.

K8 is an active-site residue. Position 90–100 (P90–S100) interacts with ATP. Residue D132 is part of the active site.

The protein belongs to the GHMP kinase family. IspE subfamily.

It catalyses the reaction 4-CDP-2-C-methyl-D-erythritol + ATP = 4-CDP-2-C-methyl-D-erythritol 2-phosphate + ADP + H(+). The protein operates within isoprenoid biosynthesis; isopentenyl diphosphate biosynthesis via DXP pathway; isopentenyl diphosphate from 1-deoxy-D-xylulose 5-phosphate: step 3/6. Functionally, catalyzes the phosphorylation of the position 2 hydroxy group of 4-diphosphocytidyl-2C-methyl-D-erythritol. This chain is 4-diphosphocytidyl-2-C-methyl-D-erythritol kinase, found in Chlamydia trachomatis serovar A (strain ATCC VR-571B / DSM 19440 / HAR-13).